The sequence spans 344 residues: uncharacterized protein (344 aa).

The first 28 residues, 1–28 (MNKKSLNIVATLGILLVLAFSGCVDQSA), serve as a signal peptide directing secretion.

This sequence belongs to the bacterial solute-binding protein 1 family. WtpA subfamily.

This is an uncharacterized protein from Methanococcus maripaludis (strain C7 / ATCC BAA-1331).